The chain runs to 103 residues: Large ribosomal subunit protein eL42 (103 aa).

Positions 18 and 21 each coordinate Zn(2+). The segment at 18-81 adopts a C4-type zinc-finger fold; it reads CPKCRTHTEH…TVLKLKCSKC (64 aa). The disordered stretch occupies residues 40 to 62; the sequence is LSEGERRYARKKKGYGSKRKPEQ. Residues 47 to 57 are compositionally biased toward basic residues; it reads YARKKKGYGSK. The Zn(2+) site is built by C78 and C81.

The protein belongs to the eukaryotic ribosomal protein eL42 family. Part of the 50S ribosomal subunit. Requires Zn(2+) as cofactor.

Binds to the 23S rRNA. This is Large ribosomal subunit protein eL42 from Desulfurococcus amylolyticus (strain DSM 18924 / JCM 16383 / VKM B-2413 / 1221n) (Desulfurococcus kamchatkensis).